Here is a 513-residue protein sequence, read N- to C-terminus: Cytochrome P450 86A1 (513 aa).

The chain crosses the membrane as a helical span at residues 7–27; sequence ILTGYAVAALSVYALWFYFLS. C456 contributes to the heme binding site.

Belongs to the cytochrome P450 family. The cofactor is heme. In terms of tissue distribution, expressed in roots.

The protein resides in the membrane. It catalyses the reaction an omega-methyl-long-chain fatty acid + reduced [NADPH--hemoprotein reductase] + O2 = an omega-hydroxy-long-chain fatty acid + oxidized [NADPH--hemoprotein reductase] + H2O + H(+). Functionally, catalyzes the omega-hydroxylation of various fatty acids (FA). Acts on saturated and unsaturated fatty acids with chain lengths from C12 to C18 but not on hexadecane. The sequence is that of Cytochrome P450 86A1 (CYP86A1) from Arabidopsis thaliana (Mouse-ear cress).